A 337-amino-acid polypeptide reads, in one-letter code: DNA-directed RNA polymerase subunit alpha (337 aa).

The interval 1 to 233 (MIQKNWQELI…DQLAIFVNFE (233 aa)) is alpha N-terminal domain (alpha-NTD). Positions 249-337 (FNPALLKKVD…DLAKRYEDQY (89 aa)) are alpha C-terminal domain (alpha-CTD).

Belongs to the RNA polymerase alpha chain family. As to quaternary structure, homodimer. The RNAP catalytic core consists of 2 alpha, 1 beta, 1 beta' and 1 omega subunit. When a sigma factor is associated with the core the holoenzyme is formed, which can initiate transcription.

The enzyme catalyses RNA(n) + a ribonucleoside 5'-triphosphate = RNA(n+1) + diphosphate. In terms of biological role, DNA-dependent RNA polymerase catalyzes the transcription of DNA into RNA using the four ribonucleoside triphosphates as substrates. This chain is DNA-directed RNA polymerase subunit alpha, found in Brucella anthropi (strain ATCC 49188 / DSM 6882 / CCUG 24695 / JCM 21032 / LMG 3331 / NBRC 15819 / NCTC 12168 / Alc 37) (Ochrobactrum anthropi).